Consider the following 199-residue polypeptide: Ubiquitin-conjugating enzyme E2-22 kDa (199 aa).

In terms of domain architecture, UBC core spans 4–154 (MAVSRIKREF…AKHWTNAYAG (151 aa)). Cysteine 92 functions as the Glycyl thioester intermediate in the catalytic mechanism. Positions 161–199 (DCDSKIQRLRDMGIDEHEARAVLSKENWNLEKATEGLFS) constitute a UBA domain.

It belongs to the ubiquitin-conjugating enzyme family. Interacts with Rpn10. In terms of tissue distribution, during gastrulation, expression is highest in the invaginating posterior midgut primordium (PMG), high expression is also observed in the cephalic furrow and ventral ectodermal neurogenic region. In stage 10-11 embryos, expression is high in the pole cells present in the pocket formed by the PMG. During germ band retraction, expression appears to reinitiate in many tissues, especially the gut and nervous system. After dorsal closure, expression is detectable at low levels throughout the embryo.

The enzyme catalyses S-ubiquitinyl-[E1 ubiquitin-activating enzyme]-L-cysteine + [E2 ubiquitin-conjugating enzyme]-L-cysteine = [E1 ubiquitin-activating enzyme]-L-cysteine + S-ubiquitinyl-[E2 ubiquitin-conjugating enzyme]-L-cysteine.. It participates in protein modification; protein ubiquitination. Catalyzes the covalent attachment of ubiquitin to other proteins. The sequence is that of Ubiquitin-conjugating enzyme E2-22 kDa from Drosophila melanogaster (Fruit fly).